The primary structure comprises 202 residues: LexA repressor (202 aa).

Positions 28–48 (RAEIAQRLGFRSPNAAEEHLK) form a DNA-binding region, H-T-H motif. Active-site for autocatalytic cleavage activity residues include Ser-119 and Lys-156.

The protein belongs to the peptidase S24 family. As to quaternary structure, homodimer.

It catalyses the reaction Hydrolysis of Ala-|-Gly bond in repressor LexA.. In terms of biological role, represses a number of genes involved in the response to DNA damage (SOS response), including recA and lexA. Binds to the 16 bp palindromic sequence 5'-CTGTATATATATACAG-3'. In the presence of single-stranded DNA, RecA interacts with LexA causing an autocatalytic cleavage which disrupts the DNA-binding part of LexA, leading to derepression of the SOS regulon and eventually DNA repair. The sequence is that of LexA repressor from Klebsiella pneumoniae subsp. pneumoniae (strain ATCC 700721 / MGH 78578).